The primary structure comprises 271 residues: Integral membrane protein 2C (271 aa).

Residue T41 is modified to Phosphothreonine. A helical; Signal-anchor for type II membrane protein transmembrane segment spans residues 59–79 (VGGVCYLSMGMVVLLMGLVFA). In terms of domain architecture, BRICHOS spans 140-234 (FGGGDPADII…LCSGKDTYRL (95 aa)). A disulfide bond links C167 and C226. An N-linked (GlcNAc...) asparagine glycan is attached at N173.

This sequence belongs to the ITM2 family. Interacts with BACE1. Interacts with APP. Interacts with STMN2. Post-translationally, type I membrane-bound, as well as soluble, furin has a pre-eminent role in ITM2C proteolytic processing. PCSK7 and PCSK5 may also be involved although to a lesser extent. The soluble form of PCSK7 is incapable of processing ITM2C. Fails to undergo shedding by ADAM10 and intramembrane cleavage by SPPL2B.

The protein resides in the lysosome membrane. It is found in the cell membrane. In terms of biological role, negative regulator of amyloid-beta peptide production. May inhibit the processing of APP by blocking its access to alpha- and beta-secretase. Binding to the beta-secretase-cleaved APP C-terminal fragment is negligible, suggesting that ITM2C is a poor gamma-secretase cleavage inhibitor. May play a role in TNF-induced cell death and neuronal differentiation. The polypeptide is Integral membrane protein 2C (ITM2C) (Bos taurus (Bovine)).